The sequence spans 197 residues: Large ribosomal subunit protein uL13A (197 aa).

Phosphoserine is present on Ser-151.

Belongs to the universal ribosomal protein uL13 family. In terms of assembly, component of the large ribosomal subunit (LSU). Mature yeast ribosomes consist of a small (40S) and a large (60S) subunit. The 40S small subunit contains 1 molecule of ribosomal RNA (18S rRNA) and at least 33 different proteins. The large 60S subunit contains 3 rRNA molecules (25S, 5.8S and 5S rRNA) and at least 46 different proteins.

It is found in the cytoplasm. The protein resides in the nucleus. Its subcellular location is the nucleolus. Component of the ribosome, a large ribonucleoprotein complex responsible for the synthesis of proteins in the cell. The small ribosomal subunit (SSU) binds messenger RNAs (mRNAs) and translates the encoded message by selecting cognate aminoacyl-transfer RNA (tRNA) molecules. The large subunit (LSU) contains the ribosomal catalytic site termed the peptidyl transferase center (PTC), which catalyzes the formation of peptide bonds, thereby polymerizing the amino acids delivered by tRNAs into a polypeptide chain. The nascent polypeptides leave the ribosome through a tunnel in the LSU and interact with protein factors that function in enzymatic processing, targeting, and the membrane insertion of nascent chains at the exit of the ribosomal tunnel. The sequence is that of Large ribosomal subunit protein uL13A (rpl1602) from Schizosaccharomyces pombe (strain 972 / ATCC 24843) (Fission yeast).